Reading from the N-terminus, the 96-residue chain is uncharacterized protein (96 aa).

Residues 13–35 traverse the membrane as a helical segment; the sequence is PVVRYVVALLHWLLWRVVVIIAI.

The protein localises to the membrane. This is an uncharacterized protein from Archaeoglobus fulgidus (strain ATCC 49558 / DSM 4304 / JCM 9628 / NBRC 100126 / VC-16).